We begin with the raw amino-acid sequence, 655 residues long: uncharacterized protein (655 aa).

In terms of domain architecture, PE-PPE spans 245-469; the sequence is PGVIAQALFT…NLKVIVNLGY (225 aa).

Belongs to the mycobacterial PPE family.

This is an uncharacterized protein from Mycobacterium tuberculosis (strain ATCC 25618 / H37Rv).